Consider the following 452-residue polypeptide: tRNA(Ile)-lysidine synthase (452 aa).

27–32 (SGGIDS) lines the ATP pocket.

The protein belongs to the tRNA(Ile)-lysidine synthase family.

It localises to the cytoplasm. The catalysed reaction is cytidine(34) in tRNA(Ile2) + L-lysine + ATP = lysidine(34) in tRNA(Ile2) + AMP + diphosphate + H(+). In terms of biological role, ligates lysine onto the cytidine present at position 34 of the AUA codon-specific tRNA(Ile) that contains the anticodon CAU, in an ATP-dependent manner. Cytidine is converted to lysidine, thus changing the amino acid specificity of the tRNA from methionine to isoleucine. This chain is tRNA(Ile)-lysidine synthase, found in Persephonella marina (strain DSM 14350 / EX-H1).